Here is a 201-residue protein sequence, read N- to C-terminus: uncharacterized protein (201 aa).

Residues 11–31 (IIILTIMILTIIIFTRTINGL) form a helical membrane-spanning segment.

The protein localises to the membrane. This is an uncharacterized protein from Acanthamoeba polyphaga mimivirus (APMV).